The following is a 432-amino-acid chain: Glutamyl-tRNA reductase (432 aa).

Residues 55-58 (TCNR), Ser114, 119-121 (ETQ), and Gln125 each bind substrate. Cys56 serves as the catalytic Nucleophile. 194–199 (GAGEMI) provides a ligand contact to NADP(+).

Belongs to the glutamyl-tRNA reductase family. As to quaternary structure, homodimer.

It carries out the reaction (S)-4-amino-5-oxopentanoate + tRNA(Glu) + NADP(+) = L-glutamyl-tRNA(Glu) + NADPH + H(+). It functions in the pathway porphyrin-containing compound metabolism; protoporphyrin-IX biosynthesis; 5-aminolevulinate from L-glutamyl-tRNA(Glu): step 1/2. Catalyzes the NADPH-dependent reduction of glutamyl-tRNA(Glu) to glutamate 1-semialdehyde (GSA). The protein is Glutamyl-tRNA reductase of Burkholderia lata (strain ATCC 17760 / DSM 23089 / LMG 22485 / NCIMB 9086 / R18194 / 383).